A 388-amino-acid polypeptide reads, in one-letter code: Homeobox protein XHOX-3 (388 aa).

2 disordered regions span residues 30–109 and 131–163; these read AVGS…SDFY and SAGQ…FSAC. Composition is skewed to polar residues over residues 68 to 81 and 91 to 103; these read ATGQ…QLRI and DSLS…SSSD. The segment at residues 168–227 is a DNA-binding region (homeobox); that stretch reads MRRYRTAFTREQIARLEKEFYRENYVSRPRRCELAAALNLPETTIKVWFQNRRMKDKRQR.

This sequence belongs to the even-skipped homeobox family.

Its subcellular location is the nucleus. In terms of biological role, may be required for posterior development and development of normal embryonic axial pattern. This chain is Homeobox protein XHOX-3 (xhox3), found in Xenopus laevis (African clawed frog).